We begin with the raw amino-acid sequence, 209 residues long: Protein-L-isoaspartate O-methyltransferase (209 aa).

The active site involves serine 55.

It belongs to the methyltransferase superfamily. L-isoaspartyl/D-aspartyl protein methyltransferase family.

It is found in the cytoplasm. The catalysed reaction is [protein]-L-isoaspartate + S-adenosyl-L-methionine = [protein]-L-isoaspartate alpha-methyl ester + S-adenosyl-L-homocysteine. Catalyzes the methyl esterification of L-isoaspartyl residues in peptides and proteins that result from spontaneous decomposition of normal L-aspartyl and L-asparaginyl residues. It plays a role in the repair and/or degradation of damaged proteins. In Anaeromyxobacter dehalogenans (strain 2CP-C), this protein is Protein-L-isoaspartate O-methyltransferase.